Consider the following 404-residue polypeptide: Multidrug resistance protein MdtG (404 aa).

A run of 11 helical transmembrane segments spans residues 19–39 (LGCF…PLYV), 56–76 (LVFS…GGLA), 90–110 (LGMA…QFLI), 113–133 (ALLG…ATQV), 144–164 (TLST…GLLA), 171–191 (PVFF…FFFI), 222–242 (LFVT…ILTL), 254–274 (IAFI…LSAP), 288–308 (ILIV…FVQT), 317–337 (FLLG…LVYN), and 376–396 (AVFC…WNSL).

The protein belongs to the major facilitator superfamily. DHA1 family. MdtG (TC 2.A.1.2.20) subfamily.

It localises to the cell inner membrane. The polypeptide is Multidrug resistance protein MdtG (Salmonella typhi).